The chain runs to 496 residues: Versicolorin B desaturase stcL (496 aa).

Residues 3–23 (FLSLPILTALGAVVYVLFQLV) form a helical membrane-spanning segment. Cysteine 440 contributes to the heme binding site.

It belongs to the cytochrome P450 family. It depends on heme as a cofactor.

The protein resides in the membrane. It carries out the reaction versicolorin B + NADPH + O2 + H(+) = versicolorin A + NADP(+) + 2 H2O. The protein operates within mycotoxin biosynthesis; sterigmatocystin biosynthesis. Cytochrome P450 monooxygenase; part of the gene cluster that mediates the biosynthesis of sterigmatocystin (ST), a polyketide-derived furanocoumarin which is part of the most toxic and carcinogenic compounds among the known mycotoxins. The first step in the biosynthesis of sterigmatocystin is the production of hexanoate by the fatty acid synthase (FAS) units stcJ and stcK. The polyketide backbone is assembled by the non-reducing polyketide synthase stcA by condensation of the starter hexanoyl-CoA and 7 malonyl-CoA extender units followed by cyclization and release of norsolorinic acid. Norsolorinic acid is the first stable intermediate in the biosynthesis of sterigmatocystin and is converted into averantin (AVN) by the ketoreductase stcE which reduces the hexanoate ketone to an alcohol. Averantin is then oxidized into 5'-hydroxyaverantin (HAVN) by the cytochrome P450 monooxygenase stcF. 5'-hydroxyaverantin is further converted to 5'-oxyaverantin (OAVN) by the 5'-hydroxyaverantin dehydrogenase stcG. The next step is the conversion of OAVN into averufin (AVF) which is catalyzed by a yet to be identified enzyme. The cytochrome P450 monooxygenase stcB and the flavin-binding monooxygenase stcW are both required for the conversion of averufin to 1-hydroxyversicolorone. The esterase stcI probably catalyzes the formation of versiconal hemiacetal acetate from 1-hydroxyversicolorone. The oxydoreductase stcN then probably catalyzes the biosynthetic step from versiconal to versicolorin B (VERB). The next step is performed by the versicolorin B desaturase stcL to produce versicolorin A (VERA). The ketoreductase stcU and the cytochrome P450 monooxygenase stcS are involved in the conversion of versicolorin A to demethylsterigmatocystin. The Baeyer-Villiger oxidas stcQ and the reductase stcR might be involved in the biosynthetic step from versicolorin A to demethylsterigmatocystin. The final step in the biosynthesis of sterigmatocystin is the methylation of demethylsterigmatocystin catalyzed by the methyltransferase stcP. The chain is Versicolorin B desaturase stcL from Emericella nidulans (strain FGSC A4 / ATCC 38163 / CBS 112.46 / NRRL 194 / M139) (Aspergillus nidulans).